The sequence spans 349 residues: MALLDICNLNIEIQTSNGRIKIVDGVNLSLNEGEISGLVGESGSGKSLIAKVICNAIKENWIITADRFRFHDVELLKLSPNKRRKLVGKEISMIFQNPLSCLDPSRKIGKQLIQNIPNWTFKNKWWKWFGWKKRRAIELLHRVGIKDHRDIMASYPNELTEGEGQKVMIAMAVANQPRLLIADEPTNALESTTALQVFRLLSSMNQNQGTTILLTSNDIKSISEWCDQISVLYCGQNTESAPTEILIESPHHPYTQALINAVPDFTQPLGFKTKLGTLEGTAPILEQMPIGCRLGPRCPFAQKKCMEKPRRLKIKQHEFSCHYPINLREKNFKEKTTATPFILNCKGNE.

The ABC transporter domain maps to 1–259 (MALLDICNLN…PHHPYTQALI (259 aa)). 40-47 (GESGSGKS) is an ATP binding site.

It belongs to the ABC transporter superfamily.

Its subcellular location is the cell inner membrane. Involved in a peptide intake transport system that plays a role in the resistance to antimicrobial peptides. In Haemophilus influenzae (strain ATCC 51907 / DSM 11121 / KW20 / Rd), this protein is Peptide transport system ATP-binding protein SapD (sapD).